The primary structure comprises 416 residues: Putative competence-damage inducible protein (416 aa).

This sequence belongs to the CinA family.

In Levilactobacillus brevis (strain ATCC 367 / BCRC 12310 / CIP 105137 / JCM 1170 / LMG 11437 / NCIMB 947 / NCTC 947) (Lactobacillus brevis), this protein is Putative competence-damage inducible protein.